The sequence spans 243 residues: 1-(5-phosphoribosyl)-5-[(5-phosphoribosylamino)methylideneamino] imidazole-4-carboxamide isomerase (243 aa).

The active-site Proton acceptor is the D8. D129 (proton donor) is an active-site residue.

It belongs to the HisA/HisF family.

The protein localises to the cytoplasm. The catalysed reaction is 1-(5-phospho-beta-D-ribosyl)-5-[(5-phospho-beta-D-ribosylamino)methylideneamino]imidazole-4-carboxamide = 5-[(5-phospho-1-deoxy-D-ribulos-1-ylimino)methylamino]-1-(5-phospho-beta-D-ribosyl)imidazole-4-carboxamide. It functions in the pathway amino-acid biosynthesis; L-histidine biosynthesis; L-histidine from 5-phospho-alpha-D-ribose 1-diphosphate: step 4/9. This chain is 1-(5-phosphoribosyl)-5-[(5-phosphoribosylamino)methylideneamino] imidazole-4-carboxamide isomerase, found in Brucella suis biovar 1 (strain 1330).